We begin with the raw amino-acid sequence, 234 residues long: MSKKITKRMQALLDKVDTQKVYDITTASVSVKSLASAKFDETVEVALKLGVDPRHADQMIRGAVVLPHGTGKKVRVAVFAKGVKADEAKAAGADVVGDDDLAEEIKNGNINFDIVIATPDMMALVGKVGRILGPKGLMPNPKTGTVTADVTKAVNNVKSGQVNFRVDKKGNIHAPVGKASFDAEKIKENVLELVKMINRLKPATAKGKYIRHAAISLTMSPSLELDAQELMDAR.

It belongs to the universal ribosomal protein uL1 family. In terms of assembly, part of the 50S ribosomal subunit.

Functionally, binds directly to 23S rRNA. The L1 stalk is quite mobile in the ribosome, and is involved in E site tRNA release. Its function is as follows. Protein L1 is also a translational repressor protein, it controls the translation of the L11 operon by binding to its mRNA. This is Large ribosomal subunit protein uL1 from Wolinella succinogenes (strain ATCC 29543 / DSM 1740 / CCUG 13145 / JCM 31913 / LMG 7466 / NCTC 11488 / FDC 602W) (Vibrio succinogenes).